The sequence spans 902 residues: MISNLFTKIFGSRNDRTIKNLRKTVALINALETQLEALSDDDLKAKTAEFRERYDNGQSLDDLLPEAFAVVREASKRVNGMRHFDVQLLGGMVLHQGRIAEMRTGEGKTLTATLPAYLNGLTGKGVHVITVNDYLAKRDAETNRPLFEFLGLTVGCNVPGMMPQQKKQAYVADITYGTNNEFGFDYLRDNMAFSIDERVQRPLFYAVVDEVDSILIDEARTPLIISGPAEDSSELYTEINTMVPLLELQEKEDEEGIEGDGDFTIDEKSKQVHLTERGQIKVEELLTERGLIAEGDSLYSAASITLLSHVYAALRAHKLYQKDVDYVVKENEVIIIDEHTGRSMEGRRWSEGLHQAVEAKEGVNIQNENQTLASITFQNYFRLYETLAGMTGTADTEAFEFQSIYGLDTVVMPTNKPMVRDDRADLVYLTQEEKYEAILVDIKDCQERGQPVLVGTISIESSEYLSQFLRKEKIKHNVLNAKFHAQEADIVSDAGLPGTVTIATNMAGRGTDIVLGGNWHSEVEKLENPTDEQIAEIKAAWKIRHDAVIDAGGLHIIGTERHESRRIDNQLRGRSGRQGDAGSSRFYLSMDDALMRIFAGERMTNMMRKLGMQRGEAIEHPWVNRAIENAQRKVEARNFDVRKQLLEYDDVANDQRRVVYSQRNELLEEGDISETITVIRGDVLSNIIDQYIAPQSLAEMWDVPGLEERLKQDFLIELPITQWLADDNKLYEEKLRERIEESVGQAYKQKEEMVGDSVLRQFEKAIMLQSLDQHWKDHLAAMDHLRQGIHLRGYAQKNPKQEYKRESFELFAEMLENLKIDVVSILSKVQVRAEEDVEKVEEQHRKSENAPREYQHEEVEHVGGEAPQSATVMARSEPKVGRNDPCPCGSGQKFKQCCGKLK.

ATP contacts are provided by residues Gln87, 105–109 (GEGKT), and Asp512. The interval 836–902 (DVEKVEEQHR…KFKQCCGKLK (67 aa)) is disordered. Basic and acidic residues predominate over residues 840–863 (VEEQHRKSENAPREYQHEEVEHVG). Zn(2+) contacts are provided by Cys886, Cys888, Cys897, and Cys898.

It belongs to the SecA family. In terms of assembly, monomer and homodimer. Part of the essential Sec protein translocation apparatus which comprises SecA, SecYEG and auxiliary proteins SecDF-YajC and YidC. Zn(2+) is required as a cofactor.

Its subcellular location is the cell inner membrane. It localises to the cytoplasm. The catalysed reaction is ATP + H2O + cellular proteinSide 1 = ADP + phosphate + cellular proteinSide 2.. Functionally, part of the Sec protein translocase complex. Interacts with the SecYEG preprotein conducting channel. Has a central role in coupling the hydrolysis of ATP to the transfer of proteins into and across the cell membrane, serving both as a receptor for the preprotein-SecB complex and as an ATP-driven molecular motor driving the stepwise translocation of polypeptide chains across the membrane. This chain is Protein translocase subunit SecA, found in Pseudoalteromonas translucida (strain TAC 125).